Here is a 398-residue protein sequence, read N- to C-terminus: uncharacterized protein (398 aa).

An N6-(pyridoxal phosphate)lysine modification is found at K212.

The protein belongs to the trans-sulfuration enzymes family. Requires pyridoxal 5'-phosphate as cofactor.

This is an uncharacterized protein from Schizosaccharomyces pombe (strain 972 / ATCC 24843) (Fission yeast).